The chain runs to 517 residues: Crotonobetaine/carnitine--CoA ligase (517 aa).

This sequence belongs to the ATP-dependent AMP-binding enzyme family.

It carries out the reaction 4-(trimethylamino)butanoate + ATP + CoA = 4-(trimethylamino)butanoyl-CoA + AMP + diphosphate. The catalysed reaction is crotonobetaine + ATP + CoA = crotonobetainyl-CoA + AMP + diphosphate. The enzyme catalyses (R)-carnitine + ATP + CoA = (R)-carnitinyl-CoA + AMP + diphosphate. It participates in amine and polyamine metabolism; carnitine metabolism. In terms of biological role, catalyzes the transfer of CoA to carnitine, generating the initial carnitinyl-CoA needed for the CaiB reaction cycle. Also has activity toward crotonobetaine and gamma-butyrobetaine. The chain is Crotonobetaine/carnitine--CoA ligase from Escherichia coli O6:K15:H31 (strain 536 / UPEC).